The primary structure comprises 170 residues: NADH-quinone oxidoreductase subunit B (170 aa).

4 residues coordinate [4Fe-4S] cluster: cysteine 37, cysteine 38, cysteine 102, and cysteine 131.

It belongs to the complex I 20 kDa subunit family. In terms of assembly, NDH-1 is composed of 14 different subunits. Subunits NuoB, C, D, E, F, and G constitute the peripheral sector of the complex. [4Fe-4S] cluster serves as cofactor.

It localises to the cell inner membrane. The enzyme catalyses a quinone + NADH + 5 H(+)(in) = a quinol + NAD(+) + 4 H(+)(out). In terms of biological role, NDH-1 shuttles electrons from NADH, via FMN and iron-sulfur (Fe-S) centers, to quinones in the respiratory chain. The immediate electron acceptor for the enzyme in this species is believed to be ubiquinone. Couples the redox reaction to proton translocation (for every two electrons transferred, four hydrogen ions are translocated across the cytoplasmic membrane), and thus conserves the redox energy in a proton gradient. The sequence is that of NADH-quinone oxidoreductase subunit B from Geotalea daltonii (strain DSM 22248 / JCM 15807 / FRC-32) (Geobacter daltonii).